A 241-amino-acid chain; its full sequence is MGRGKIVIRRIDNSTSRQVTFSKRRNGLLKKAKELSILCDAEVGLVVFSSTGRLYEFSSTNMKTVIDRYTNAKEELLGGNATSEIKIWQREAASLRQQLHNLQESHKQLMGEELSGLGVRDLQGLENRLEISLRNIRMRKDNLLKSEIEELHVKGSLIHQENIELSRSLNVMSQQKLELYNKLQACEQRGATDANESSSTPYSFRIIQNANMPPSLELSQSQQREGECSKTAAPELGLHLP.

Positions 1–61 (MGRGKIVIRR…GRLYEFSSTN (61 aa)) constitute an MADS-box domain. Residues 85–178 (IKIWQREAAS…LNVMSQQKLE (94 aa)) enclose the K-box domain. The tract at residues 216–241 (LELSQSQQREGECSKTAAPELGLHLP) is disordered.

As to quaternary structure, interacts with TB1. As to expression, expressed in seedling roots and shoots. Highly expressed in young leaves.

Its subcellular location is the nucleus. Transcriptional factor that targets the CArG motif 5'-C(A/T)TTAAAAAG-3' in the promoter of D14. Directly suppresses D14 expression to control the outgrowth of axillary buds. In Oryza sativa subsp. japonica (Rice), this protein is MADS-box transcription factor 57.